The following is a 508-amino-acid chain: Glycerol kinase (508 aa).

Thr-14 lines the ADP pocket. ATP contacts are provided by Thr-14, Thr-15, and Ser-16. Thr-14 provides a ligand contact to sn-glycerol 3-phosphate. Arg-18 is an ADP binding site. Sn-glycerol 3-phosphate contacts are provided by Arg-84, Glu-85, Tyr-136, and Asp-245. Residues Arg-84, Glu-85, Tyr-136, Asp-245, and Gln-246 each contribute to the glycerol site. Thr-267 and Gly-314 together coordinate ADP. The ATP site is built by Thr-267, Gly-314, Gln-318, and Gly-415. 2 residues coordinate ADP: Gly-415 and Asn-419.

Belongs to the FGGY kinase family.

The enzyme catalyses glycerol + ATP = sn-glycerol 3-phosphate + ADP + H(+). Its pathway is polyol metabolism; glycerol degradation via glycerol kinase pathway; sn-glycerol 3-phosphate from glycerol: step 1/1. With respect to regulation, inhibited by fructose 1,6-bisphosphate (FBP). Its function is as follows. Key enzyme in the regulation of glycerol uptake and metabolism. Catalyzes the phosphorylation of glycerol to yield sn-glycerol 3-phosphate. The polypeptide is Glycerol kinase (Bordetella parapertussis (strain 12822 / ATCC BAA-587 / NCTC 13253)).